The following is a 436-amino-acid chain: 3-ketoacyl-CoA thiolase (436 aa).

Cys-99 functions as the Acyl-thioester intermediate in the catalytic mechanism. Active-site proton acceptor residues include His-392 and Cys-422.

This sequence belongs to the thiolase-like superfamily. Thiolase family. As to quaternary structure, heterotetramer of two alpha chains (FadJ) and two beta chains (FadI).

The protein resides in the cytoplasm. It catalyses the reaction an acyl-CoA + acetyl-CoA = a 3-oxoacyl-CoA + CoA. The protein operates within lipid metabolism; fatty acid beta-oxidation. Catalyzes the final step of fatty acid oxidation in which acetyl-CoA is released and the CoA ester of a fatty acid two carbons shorter is formed. In Citrobacter koseri (strain ATCC BAA-895 / CDC 4225-83 / SGSC4696), this protein is 3-ketoacyl-CoA thiolase.